The chain runs to 104 residues: Replication restart protein PriB (104 aa).

The region spanning 1–101 (MTNRLTLSGT…LHAEQIELID (101 aa)) is the SSB domain.

This sequence belongs to the PriB family. Homodimer. Interacts with PriA and DnaT. Component of the replication restart primosome. Primosome assembly occurs via a 'hand-off' mechanism. PriA binds to replication forks, subsequently PriB then DnaT bind; DnaT then displaces ssDNA to generate the helicase loading substrate.

Its function is as follows. Involved in the restart of stalled replication forks, which reloads the replicative helicase on sites other than the origin of replication; the PriA-PriB pathway is the major replication restart pathway. During primosome assembly it facilitates complex formation between PriA and DnaT on DNA; stabilizes PriA on DNA. Stimulates the DNA unwinding activity of PriA helicase. The protein is Replication restart protein PriB of Salmonella typhi.